The sequence spans 301 residues: Cutinase (301 aa).

Positions 1–40 are cleaved as a signal peptide; it reads MAVMTPRRERSSLLSRALQVTAAAATALVTAVSLAAPAHA. A poly(ethylene terephthalate)-binding site is contributed by tyrosine 100. The Nucleophile role is filled by serine 170. Poly(ethylene terephthalate) is bound by residues methionine 171 and tryptophan 195. Active-site charge relay system residues include aspartate 216 and histidine 248. Cysteine 281 and cysteine 299 are joined by a disulfide.

Belongs to the AB hydrolase superfamily.

The protein localises to the secreted. Its subcellular location is the periplasm. It carries out the reaction a butanoate ester + H2O = an aliphatic alcohol + butanoate + H(+). The catalysed reaction is (ethylene terephthalate)(n) + H2O = (ethylene terephthalate)(n-1) + 4-[(2-hydroxyethoxy)carbonyl]benzoate + H(+). The enzyme catalyses cutin + H2O = cutin monomers.. Its activity is regulated as follows. Activated by magnesium ions. Activated by calcium ions. Inhibited by the serine hydrolase inhibitor phenylmethanesulfonyl fluoride (PMSF). Functionally, catalyzes the hydrolysis of cutin, a polyester that forms the structure of plant cuticle. Shows esterase activity towards p-nitrophenol-linked aliphatic esters (pNP-aliphatic esters). Also hydrolyzes the triglyceride triolein. Capable of degrading the plastic poly(ethylene terephthalate) (PET), the most abundant polyester plastic in the world. In Thermobifida fusca (strain YX), this protein is Cutinase.